The primary structure comprises 349 residues: DNA replication and repair protein RecF (349 aa).

G30–T37 provides a ligand contact to ATP.

It belongs to the RecF family.

The protein resides in the cytoplasm. The RecF protein is involved in DNA metabolism; it is required for DNA replication and normal SOS inducibility. RecF binds preferentially to single-stranded, linear DNA. It also seems to bind ATP. This chain is DNA replication and repair protein RecF, found in Francisella tularensis subsp. tularensis (strain FSC 198).